Here is a 326-residue protein sequence, read N- to C-terminus: uncharacterized protein (326 aa).

Ser132 is a binding site for substrate. The Proton acceptor role is filled by Tyr157.

This sequence belongs to the NAD(P)-dependent epimerase/dehydratase family. dTDP-glucose dehydratase subfamily.

This is an uncharacterized protein from Methanocaldococcus jannaschii (strain ATCC 43067 / DSM 2661 / JAL-1 / JCM 10045 / NBRC 100440) (Methanococcus jannaschii).